The primary structure comprises 55 residues: Large ribosomal subunit protein bL33 (55 aa).

It belongs to the bacterial ribosomal protein bL33 family.

The protein is Large ribosomal subunit protein bL33 of Mesorhizobium japonicum (strain LMG 29417 / CECT 9101 / MAFF 303099) (Mesorhizobium loti (strain MAFF 303099)).